We begin with the raw amino-acid sequence, 457 residues long: MTTDEGAKSSRENPAATVAEQGEDVTSKKDRGVLKIVKRVGHGEETPMIGDKVYVHYNGKLSNGKKFDSSHDRNEPFVFSIGKGQVIKAWDIGVSTMKKGEICHLLCKPEYAYGATGSLPKIPSNATLFFEVELLNFKGEDLLEDGGIIRRTKRRGEGYSNPNEGARVQIHLEGRCGGRVFDCRDVAFTVGEGEDHDIPIGIDKALEKMQREEQCILHLGPRYGFGEAGKPKFGIEPNAELIYEVTLKSFEKAKESWEMDTKEKLEQAAIVKEEGTVYFKGGKYVQAVIQYGKIVSWLEMEYGLSEKESKASESFLLAAFLNLAMCYLKLREYAKAVECCDKALGLDSANEKGLYRRGEAQLLMNEFESAKGDFEKVLEVNPQNKAARLQIVVCQKKAKEHNERDRRIYANMFKKFAEQDAKEEANKAVSKKTSEGVTNEKLTVSHAVEEEKPEGHV.

Position 1 is an N-acetylmethionine (methionine 1). Over residues 1-11 (MTTDEGAKSSR) the composition is skewed to basic and acidic residues. A disordered region spans residues 1–28 (MTTDEGAKSSRENPAATVAEQGEDVTSK). Lysine 28 is modified (N6-acetyllysine). PPIase FKBP-type domains are found at residues 50–138 (GDKV…LNFK) and 165–251 (GARV…KSFE). TPR repeat units lie at residues 268–301 (AAIVKEEGTVYFKGGKYVQAVIQYGKIVSWLEME), 317–350 (LAAFLNLAMCYLKLREYAKAVECCDKALGLDSAN), and 351–384 (EKGLYRRGEAQLLMNEFESAKGDFEKVLEVNPQN). The segment at 424-457 (EANKAVSKKTSEGVTNEKLTVSHAVEEEKPEGHV) is disordered. Position 445 is a phosphoserine (serine 445). Basic and acidic residues predominate over residues 447 to 457 (AVEEEKPEGHV).

Part of a heteromultimeric cytoplasmic complex with HSP90AA1, HSPA1A/HSPA1B and steroid receptors. Upon ligand binding dissociates from the complex and FKBP4 takes its place. Interacts with functionally mature heterooligomeric progesterone receptor complexes along with HSP90 and TEBP. Interacts with NR3C1. Interacts with Akt/AKT1 and PHLPP1; enhancing dephosphorylation and subsequent activation of Akt/AKT1. Interacts with IFI44L; this interaction modulates the kinase activity of IKBKB and IKBKE. Interacts with IKBKB and IKBKE. In terms of processing, acetylation impairs ability to promote interaction between Akt/AKT1 and PHLPP1. Deacetylation by SIRT7 promotes interaction between Akt/AKT1 and PHLPP1, leading to suppress Akt/AKT1 activation. Ubiquitinated, leading to degradation in a proteasome-dependent manner. Deubiquitinated by USP49, leading to stabilization.

The protein localises to the cytoplasm. It is found in the nucleus. The catalysed reaction is [protein]-peptidylproline (omega=180) = [protein]-peptidylproline (omega=0). Inhibited by both FK506 and rapamycin. Functionally, immunophilin protein with PPIase and co-chaperone activities. Component of unligated steroid receptors heterocomplexes through interaction with heat-shock protein 90 (HSP90). Plays a role in the intracellular trafficking of heterooligomeric forms of steroid hormone receptors maintaining the complex into the cytoplasm when unliganded. Acts as a regulator of Akt/AKT1 activity by promoting the interaction between Akt/AKT1 and PHLPP1, thereby enhancing dephosphorylation and subsequent activation of Akt/AKT1. Interacts with IKBKE and IKBKB which facilitates IKK complex assembly leading to increased IKBKE and IKBKB kinase activity, NF-kappaB activation, and IFN production. The sequence is that of Peptidyl-prolyl cis-trans isomerase FKBP5 (FKBP5) from Saguinus oedipus (Cotton-top tamarin).